A 341-amino-acid polypeptide reads, in one-letter code: HTH-type transcriptional repressor PurR (341 aa).

An HTH lacI-type domain is found at 2-56 (ATIKDVAKRANVSTTTVSHVINKTRFVAEETRNAVWAAIKELHYSPSAVARSLKV). Residues 4 to 23 (IKDVAKRANVSTTTVSHVIN) constitute a DNA-binding region (H-T-H motif). A DNA-binding region spans residues 48 to 56 (SAVARSLKV). The hypoxanthine site is built by Tyr73, Arg190, Thr192, Phe221, and Asp275.

Homodimer.

It functions in the pathway purine metabolism; purine nucleotide biosynthesis [regulation]. Its function is as follows. Is the main repressor of the genes involved in the de novo synthesis of purine nucleotides, regulating purB, purC, purEK, purF, purHD, purL, purMN and guaBA expression. PurR is allosterically activated to bind its cognate DNA by binding the purine corepressors, hypoxanthine or guanine, thereby effecting transcription repression. In Escherichia fergusonii (strain ATCC 35469 / DSM 13698 / CCUG 18766 / IAM 14443 / JCM 21226 / LMG 7866 / NBRC 102419 / NCTC 12128 / CDC 0568-73), this protein is HTH-type transcriptional repressor PurR.